Here is a 156-residue protein sequence, read N- to C-terminus: Small ribosomal subunit protein uS7 (156 aa).

The protein belongs to the universal ribosomal protein uS7 family. Part of the 30S ribosomal subunit. Contacts proteins S9 and S11.

Its function is as follows. One of the primary rRNA binding proteins, it binds directly to 16S rRNA where it nucleates assembly of the head domain of the 30S subunit. Is located at the subunit interface close to the decoding center, probably blocks exit of the E-site tRNA. The sequence is that of Small ribosomal subunit protein uS7 from Limosilactobacillus fermentum (strain NBRC 3956 / LMG 18251) (Lactobacillus fermentum).